The following is a 1937-amino-acid chain: Collagen-like protein 7 (1937 aa).

N-linked (GlcNAc...) asparagine; by host glycans are attached at residues Asn6 and Asn21. Disordered stretches follow at residues 88 to 248, 294 to 531, 583 to 643, and 670 to 1144; these read CKGN…KGDK, NLKG…PDLG, LKGD…NQGV, and IKGD…DTAT. 5 consecutive Collagen-like domains span residues 102–161, 168–227, 297–356, 363–422, and 453–512; these read GPKG…KGEK, GEKG…KGDI, GEKG…KGEK, GDKG…IGEK, and GDKG…KGDK. Positions 296-514 are enriched in basic and acidic residues; that stretch reads KGEKGDKGNK…DKGDKGDKGD (219 aa). Asn515 carries N-linked (GlcNAc...) asparagine; by host glycosylation. 3 stretches are compositionally biased toward basic and acidic residues: residues 584–605, 614–625, and 670–899; these read KGDK…KGDK, KGEKGDKGDKGD, and IKGD…KGDK. 5 consecutive Collagen-like domains span residues 672–731, 735–854, 867–926, 936–995, and 1023–1142; these read GDKG…KGDK, GNKG…KGNI, GLKG…KGDK, GIKG…KGDK, and GSKG…KGDT. Asn902 is a glycosylation site (N-linked (GlcNAc...) asparagine; by host). Basic and acidic residues predominate over residues 907–1141; the sequence is YKGDKGDKGS…DKGDKGDKGD (235 aa). Asn1178, Asn1192, Asn1212, Asn1217, Asn1245, Asn1246, Asn1255, Asn1317, Asn1422, Asn1427, Asn1432, Asn1443, Asn1452, Asn1477, Asn1494, Asn1506, Asn1513, Asn1533, Asn1598, Asn1619, Asn1620, Asn1632, Asn1641, Asn1663, Asn1664, Asn1672, Asn1682, Asn1683, Asn1732, Asn1735, Asn1746, Asn1756, Asn1784, Asn1842, and Asn1934 each carry an N-linked (GlcNAc...) asparagine; by host glycan.

Post-translationally, may be hydroxylated on lysine by the viral-encoded procollagen-lysine,2-oxoglutarate 5-dioxygenase.

It is found in the virion. In terms of biological role, may participate in the formation of a layer of cross-linked glycosylated fibrils at the viral surface thus giving it a hairy-like appearance. The chain is Collagen-like protein 7 from Acanthamoeba polyphaga mimivirus (APMV).